The following is a 518-amino-acid chain: DNA-binding protein D-ETS-4 (518 aa).

2 disordered regions span residues 74–113 (SQPI…QSSP) and 152–172 (LPPS…SCGE). Polar residues predominate over residues 84 to 94 (TAPYTNPSSHQ). A compositionally biased stretch (low complexity) spans 102-113 (PHSAYPSPQSSP). Residues 158-171 (ESNCETPSPRSSCG) are compositionally biased toward polar residues. The 87-residue stretch at 258–344 (HAKREADAIC…AQLEIWKMAY (87 aa)) folds into the PNT domain. The disordered stretch occupies residues 393-426 (APLNGSTTSPPATNASNGGTATVKRPNGGRTGGG). Residues 396–412 (NGSTTSPPATNASNGGT) are compositionally biased toward polar residues. The segment at residues 430–513 (IHLWQFLKEL…RSQRLVYQFC (84 aa)) is a DNA-binding region (ETS).

The protein belongs to the ETS family. As to expression, transient high expression in pole cells during embryonic stages 8-11.

It is found in the nucleus. In terms of biological role, may have a role in germline development. This chain is DNA-binding protein D-ETS-4 (Ets98B), found in Drosophila melanogaster (Fruit fly).